Here is a 362-residue protein sequence, read N- to C-terminus: MDPATNSPIMPIDLPIMHDSDRYDFVKDIGSGNFGVARLMTDRVTKELVAVKYIERGEKIDENVQREIINHRSLRHPNIVRFKEVILTPSHLAIVMEYAAGGELYERICNAGRFSEDEARFFFQQLISGVSYCHAMQICHRDLKLENTLLDGSPAPRLKICDFGYSKSSVLHSQPKSTVGTPAYIAPEILLRQEYDGKLADVWSCGVTLYVMLVGAYPFEDPQEPRDYRKTIQRILSVTYSIPEDLHLSPECRHLISRIFVADPATRITIPEITSDKWFLKNLPGDLMDENRMGSQFQEPEQPMQSLDTIMQIISEATIPTVRNRCLDDFMADNLDLDDDMDDFDSESEIDVDSSGEIVYAL.

The Protein kinase domain occupies 23 to 279 (YDFVKDIGSG…IPEITSDKWF (257 aa)). ATP is bound by residues 29–37 (IGSGNFGVA) and Lys-52. The Proton acceptor role is filled by Asp-142.

Belongs to the protein kinase superfamily. Ser/Thr protein kinase family. As to quaternary structure, interacts with ABI1. Interacts with I-2, TOPP1 and TOPP2. Interacts with FREE1 (via C-terminus). As to expression, expressed in seeds, seedlings, roots (especially in tips), stems, leaves, shoots, flowers and siliques.

It carries out the reaction L-seryl-[protein] + ATP = O-phospho-L-seryl-[protein] + ADP + H(+). The catalysed reaction is L-threonyl-[protein] + ATP = O-phospho-L-threonyl-[protein] + ADP + H(+). Functionally, together with SRK2I, key component and activator of the abscisic acid (ABA) signaling pathway that regulates numerous ABA responses, such as seed germination, Pro accumulation, root growth inhibition, dormancy and seedling growth, and, to a lesser extent, stomatal closure. In response to ABA, phosphorylates the ESCRT-I complex component FREE1, which is required for ABA-induced FREE1 nuclear import. The sequence is that of Serine/threonine-protein kinase SRK2D (SRK2D) from Arabidopsis thaliana (Mouse-ear cress).